The chain runs to 180 residues: Negative modulator of initiation of replication (180 aa).

Interaction with DNA regions lie at residues 86 to 87 (AV), 115 to 119 (RTRVY), and 149 to 155 (NTNTGRK).

Belongs to the SeqA family. Homodimer. Polymerizes to form helical filaments.

It is found in the cytoplasm. Its function is as follows. Negative regulator of replication initiation, which contributes to regulation of DNA replication and ensures that replication initiation occurs exactly once per chromosome per cell cycle. Binds to pairs of hemimethylated GATC sequences in the oriC region, thus preventing assembly of replication proteins and re-initiation at newly replicated origins. Repression is relieved when the region becomes fully methylated. The polypeptide is Negative modulator of initiation of replication (Enterobacter sp. (strain 638)).